The sequence spans 451 residues: Bifunctional protein GlmU (451 aa).

The segment at 1–225 is pyrophosphorylase; that stretch reads MVVVAILAAG…YQEILGINDR (225 aa). UDP-N-acetyl-alpha-D-glucosamine is bound by residues 7–10, lysine 21, glutamine 72, and 77–78; these read LAAG and GT. A Mg(2+)-binding site is contributed by aspartate 102. UDP-N-acetyl-alpha-D-glucosamine contacts are provided by glycine 139, glutamate 154, asparagine 169, and asparagine 223. Position 223 (asparagine 223) interacts with Mg(2+). The segment at 226–246 is linker; it reads LQLATAYEILQRRVKEQWMMA. The segment at 247 to 451 is N-acetyltransferase; the sequence is GVTLIDPNSI…LGWRRKSGES (205 aa). Positions 328 and 346 each coordinate UDP-N-acetyl-alpha-D-glucosamine. The Proton acceptor role is filled by histidine 358. Residues tyrosine 361 and asparagine 372 each coordinate UDP-N-acetyl-alpha-D-glucosamine. Residues alanine 375, 381–382, serine 400, alanine 418, and arginine 435 each bind acetyl-CoA; that span reads NY.

It in the N-terminal section; belongs to the N-acetylglucosamine-1-phosphate uridyltransferase family. In the C-terminal section; belongs to the transferase hexapeptide repeat family. Homotrimer. Requires Mg(2+) as cofactor.

It is found in the cytoplasm. The catalysed reaction is alpha-D-glucosamine 1-phosphate + acetyl-CoA = N-acetyl-alpha-D-glucosamine 1-phosphate + CoA + H(+). The enzyme catalyses N-acetyl-alpha-D-glucosamine 1-phosphate + UTP + H(+) = UDP-N-acetyl-alpha-D-glucosamine + diphosphate. The protein operates within nucleotide-sugar biosynthesis; UDP-N-acetyl-alpha-D-glucosamine biosynthesis; N-acetyl-alpha-D-glucosamine 1-phosphate from alpha-D-glucosamine 6-phosphate (route II): step 2/2. Its pathway is nucleotide-sugar biosynthesis; UDP-N-acetyl-alpha-D-glucosamine biosynthesis; UDP-N-acetyl-alpha-D-glucosamine from N-acetyl-alpha-D-glucosamine 1-phosphate: step 1/1. It participates in bacterial outer membrane biogenesis; LPS lipid A biosynthesis. In terms of biological role, catalyzes the last two sequential reactions in the de novo biosynthetic pathway for UDP-N-acetylglucosamine (UDP-GlcNAc). The C-terminal domain catalyzes the transfer of acetyl group from acetyl coenzyme A to glucosamine-1-phosphate (GlcN-1-P) to produce N-acetylglucosamine-1-phosphate (GlcNAc-1-P), which is converted into UDP-GlcNAc by the transfer of uridine 5-monophosphate (from uridine 5-triphosphate), a reaction catalyzed by the N-terminal domain. This is Bifunctional protein GlmU from Nostoc sp. (strain PCC 7120 / SAG 25.82 / UTEX 2576).